A 274-amino-acid chain; its full sequence is Diaminopimelate epimerase (274 aa).

Residues N13, Q45, and N63 each coordinate substrate. C72 serves as the catalytic Proton donor. Residues 73–74, N158, N191, and 209–210 contribute to the substrate site; these read GN and ER. The active-site Proton acceptor is the C218. Residue 219-220 participates in substrate binding; that stretch reads GT.

The protein belongs to the diaminopimelate epimerase family. As to quaternary structure, homodimer.

The protein resides in the cytoplasm. It carries out the reaction (2S,6S)-2,6-diaminopimelate = meso-2,6-diaminopimelate. Its pathway is amino-acid biosynthesis; L-lysine biosynthesis via DAP pathway; DL-2,6-diaminopimelate from LL-2,6-diaminopimelate: step 1/1. Functionally, catalyzes the stereoinversion of LL-2,6-diaminopimelate (L,L-DAP) to meso-diaminopimelate (meso-DAP), a precursor of L-lysine and an essential component of the bacterial peptidoglycan. This chain is Diaminopimelate epimerase, found in Pelagibacter ubique (strain HTCC1062).